The chain runs to 302 residues: D-alanine--D-alanine ligase (302 aa).

Positions 104-296 (KLVFERFAIP…FPDLVTWLVE (193 aa)) constitute an ATP-grasp domain. 130-183 (AMARPYVVKPLDQGSSVGVTIVTSETNDLPFSRDDWPYGRQVMVERFIPGRELT) is an ATP binding site. Positions 251, 263, and 265 each coordinate Mg(2+).

Belongs to the D-alanine--D-alanine ligase family. Requires Mg(2+) as cofactor. The cofactor is Mn(2+).

The protein resides in the cytoplasm. The catalysed reaction is 2 D-alanine + ATP = D-alanyl-D-alanine + ADP + phosphate + H(+). The protein operates within cell wall biogenesis; peptidoglycan biosynthesis. Its function is as follows. Cell wall formation. The polypeptide is D-alanine--D-alanine ligase (Rhodospirillum rubrum (strain ATCC 11170 / ATH 1.1.1 / DSM 467 / LMG 4362 / NCIMB 8255 / S1)).